Consider the following 351-residue polypeptide: D-alanine--D-alanine ligase (351 aa).

The 209-residue stretch at Asn-135–Glu-343 folds into the ATP-grasp domain. Residue Leu-167–Ser-222 coordinates ATP. Mg(2+)-binding residues include Asp-298, Glu-310, and Asn-312.

It belongs to the D-alanine--D-alanine ligase family. The cofactor is Mg(2+). Mn(2+) serves as cofactor.

It localises to the cytoplasm. The catalysed reaction is 2 D-alanine + ATP = D-alanyl-D-alanine + ADP + phosphate + H(+). It participates in cell wall biogenesis; peptidoglycan biosynthesis. Its function is as follows. Cell wall formation. The polypeptide is D-alanine--D-alanine ligase (Leptospira interrogans serogroup Icterohaemorrhagiae serovar copenhageni (strain Fiocruz L1-130)).